Reading from the N-terminus, the 245-residue chain is Uridylate kinase (245 aa).

16–19 (KLSG) lines the ATP pocket. Residues 24 to 29 (GDNGFG) are involved in allosteric activation by GTP. G59 provides a ligand contact to UMP. ATP-binding residues include G60 and R64. UMP is bound by residues D78 and 139-146 (NGAPFFTT). Residues N167, Y173, and D176 each contribute to the ATP site.

It belongs to the UMP kinase family. Homohexamer.

It is found in the cytoplasm. It catalyses the reaction UMP + ATP = UDP + ADP. Its pathway is pyrimidine metabolism; CTP biosynthesis via de novo pathway; UDP from UMP (UMPK route): step 1/1. Allosterically activated by GTP. Inhibited by UTP. Catalyzes the reversible phosphorylation of UMP to UDP. This Deinococcus radiodurans (strain ATCC 13939 / DSM 20539 / JCM 16871 / CCUG 27074 / LMG 4051 / NBRC 15346 / NCIMB 9279 / VKM B-1422 / R1) protein is Uridylate kinase.